A 454-amino-acid polypeptide reads, in one-letter code: MILSKDIKLLPGSKVEVVIRVSKNVIQEKYNSLLQDYSSRLKIQGFRIGKVPINVIENKYSEGLKATVLEEVINNSFKEFFKEESKIPLSYATPTVKEKNLKLNLDKDFEFTFTYETYPEFKIPSFDEIDIKVEIPEVFIDDSDIDDEIKNLQIENSIIIEDEEGVVKEDSIVKVDFVELDDLSNEIVSTKRQGFVFTVGKSETYYDFDKDVIGMRINEERVIEKSYIADYKFEELAGSSRKLKIKIKSIKKRDLPLIDDEFAQDISDKYNTLDDLKNFIRSSLLNIVEEKKETLKLNKFFSTISEKLEIDIPHSMIEAEIEIAFKDAKRQNKNNMSLEEFKSIFYSSGYIGGDNLKDEILGNLKSKLIMQKMVDLDPIKVTESDVEDEMARQSKNLGVSYEEIKKFYEDQNLISYLKDDIKRERAKKKILENLKEVKGKKLNFRDFVNYKICE.

In terms of domain architecture, PPIase FKBP-type spans 170 to 256 (DSIVKVDFVE…IKSIKKRDLP (87 aa)).

Belongs to the FKBP-type PPIase family. Tig subfamily.

The protein localises to the cytoplasm. The enzyme catalyses [protein]-peptidylproline (omega=180) = [protein]-peptidylproline (omega=0). In terms of biological role, involved in protein export. Acts as a chaperone by maintaining the newly synthesized protein in an open conformation. Functions as a peptidyl-prolyl cis-trans isomerase. The sequence is that of Trigger factor (tig) from Borreliella burgdorferi (strain ATCC 35210 / DSM 4680 / CIP 102532 / B31) (Borrelia burgdorferi).